Here is a 282-residue protein sequence, read N- to C-terminus: Acyl-CoA-binding domain-containing protein 6 (282 aa).

A compositionally biased stretch (polar residues) spans M1–T12. The disordered stretch occupies residues M1–P34. Over residues G17–L31 the composition is skewed to low complexity. S41 is modified (phosphoserine). The ACB domain maps to L42 to P127. Residues Y69–K73 and K95 each bind an acyl-CoA. S106 is subject to Phosphoserine. Y114 contacts an acyl-CoA. 2 ANK repeats span residues E191 to C220 and E224 to L253.

Monomer.

Its subcellular location is the cytoplasm. Functionally, binds long-chain acyl-coenzyme A molecules with a strong preference for unsaturated C18:1-CoA, lower affinity for unsaturated C20:4-CoA, and very weak affinity for saturated C16:0-CoA. Does not bind fatty acids. The protein is Acyl-CoA-binding domain-containing protein 6 (ACBD6) of Bos taurus (Bovine).